Here is a 168-residue protein sequence, read N- to C-terminus: Siroheme decarboxylase NirH subunit (168 aa).

The protein belongs to the Ahb/Nir family. Probably forms a complex composed of NirD, NirL, NirG and NirH. All proteins are required for the total conversion of siroheme to didecarboxysiroheme.

The catalysed reaction is siroheme + 2 H(+) = 12,18-didecarboxysiroheme + 2 CO2. It participates in porphyrin-containing compound metabolism. Involved in heme d1 biosynthesis. Catalyzes the decarboxylation of siroheme into didecarboxysiroheme. In Stutzerimonas stutzeri (Pseudomonas stutzeri), this protein is Siroheme decarboxylase NirH subunit.